The following is a 247-amino-acid chain: Adenosylcobinamide-GDP ribazoletransferase (247 aa).

5 helical membrane passes run 34–54 (IITF…VFMV), 57–77 (AWCG…LMTG), 113–133 (GGLA…ELAL), 138–158 (ILAS…LLMY), and 194–214 (VLLL…AIFI).

Belongs to the CobS family. The cofactor is Mg(2+).

It localises to the cell inner membrane. It catalyses the reaction alpha-ribazole + adenosylcob(III)inamide-GDP = adenosylcob(III)alamin + GMP + H(+). The catalysed reaction is alpha-ribazole 5'-phosphate + adenosylcob(III)inamide-GDP = adenosylcob(III)alamin 5'-phosphate + GMP + H(+). Its pathway is cofactor biosynthesis; adenosylcobalamin biosynthesis; adenosylcobalamin from cob(II)yrinate a,c-diamide: step 7/7. Functionally, joins adenosylcobinamide-GDP and alpha-ribazole to generate adenosylcobalamin (Ado-cobalamin). Also synthesizes adenosylcobalamin 5'-phosphate from adenosylcobinamide-GDP and alpha-ribazole 5'-phosphate. In Shigella flexneri serotype 5b (strain 8401), this protein is Adenosylcobinamide-GDP ribazoletransferase.